We begin with the raw amino-acid sequence, 104 residues long: N(4)-acetylcytidine amidohydrolase (104 aa).

Positions 7-104 (TFFTRFEQDI…FWVIAFELVD (98 aa)) constitute an ASCH domain. Lys-21 functions as the Proton acceptor in the catalytic mechanism. Thr-24 functions as the Nucleophile in the catalytic mechanism. Glu-74 (proton donor) is an active-site residue.

This sequence belongs to the N(4)-acetylcytidine amidohydrolase family.

The catalysed reaction is N(4)-acetylcytidine + H2O = cytidine + acetate + H(+). It carries out the reaction N(4)-acetyl-2'-deoxycytidine + H2O = 2'-deoxycytidine + acetate + H(+). It catalyses the reaction N(4)-acetylcytosine + H2O = cytosine + acetate + H(+). Its function is as follows. Catalyzes the hydrolysis of N(4)-acetylcytidine (ac4C). This is N(4)-acetylcytidine amidohydrolase from Pasteurella multocida (strain Pm70).